The sequence spans 258 residues: Protein U52 (258 aa).

This sequence belongs to the herpesviridae UL79 family.

The polypeptide is Protein U52 (U52) (Human herpesvirus 6B (strain Z29) (HHV-6 variant B)).